A 203-amino-acid chain; its full sequence is uncharacterized protein (203 aa).

This is an uncharacterized protein from Pasteurella multocida (strain Pm70).